Reading from the N-terminus, the 426-residue chain is Serine--tRNA ligase (426 aa).

An L-serine-binding site is contributed by 233–235 (TAE). 264-266 (RSE) provides a ligand contact to ATP. E287 contacts L-serine. 351–354 (EISS) lines the ATP pocket. S387 is an L-serine binding site.

It belongs to the class-II aminoacyl-tRNA synthetase family. Type-1 seryl-tRNA synthetase subfamily. In terms of assembly, homodimer. The tRNA molecule binds across the dimer.

The protein localises to the cytoplasm. The enzyme catalyses tRNA(Ser) + L-serine + ATP = L-seryl-tRNA(Ser) + AMP + diphosphate + H(+). The catalysed reaction is tRNA(Sec) + L-serine + ATP = L-seryl-tRNA(Sec) + AMP + diphosphate + H(+). It functions in the pathway aminoacyl-tRNA biosynthesis; selenocysteinyl-tRNA(Sec) biosynthesis; L-seryl-tRNA(Sec) from L-serine and tRNA(Sec): step 1/1. Functionally, catalyzes the attachment of serine to tRNA(Ser). Is also able to aminoacylate tRNA(Sec) with serine, to form the misacylated tRNA L-seryl-tRNA(Sec), which will be further converted into selenocysteinyl-tRNA(Sec). In Pseudomonas aeruginosa (strain LESB58), this protein is Serine--tRNA ligase.